The sequence spans 568 residues: Protein yellow (568 aa).

The N-terminal stretch at 1–28 (MHAQDKGGILPALSLLLIAVAMVSPSQA) is a signal peptide. Residues N151 and N222 are each glycosylated (N-linked (GlcNAc...) asparagine).

This sequence belongs to the major royal jelly protein family.

The protein localises to the secreted. In terms of biological role, controls the pigmentation pattern of the adult cuticle and larval mouth parts. The sequence is that of Protein yellow (y) from Drosophila madeirensis (Fruit fly).